A 287-amino-acid polypeptide reads, in one-letter code: Probable aquaporin PIP1-4 (287 aa).

Methionine 1 carries the post-translational modification N-acetylmethionine. Positions 1 to 36 (MEGKEEDVRVGANKFPERQPIGTSAQSTDKDYKEPP) are disordered. Residues 1-55 (MEGKEEDVRVGANKFPERQPIGTSAQSTDKDYKEPPPAPLFEPGELSSWSFYRAG) are Cytoplasmic-facing. Residues 56–76 (IAEFIATFLFLYITVLTVMGV) traverse the membrane as a helical segment. Residues 77 to 92 (KRAPNMCASVGIQGIA) are Extracellular-facing. Residues 93-113 (WAFGGMIFALVYCTAGISGGH) traverse the membrane as a helical segment. At 114 to 133 (INPAVTFGLFLARKLSLTRA) the chain is on the cytoplasmic side. An NPA 1 motif is present at residues 115–117 (NPA). The helical transmembrane segment at 134–154 (VFYMIMQCLGAICGAGVVKGF) threads the bilayer. The Extracellular portion of the chain corresponds to 155 to 175 (QPTPYQTLGGGANTVAHGYTK). The chain crosses the membrane as a helical span at residues 176 to 196 (GSGLGAEIIGTFVLVYTVFSA). Topologically, residues 197 to 209 (TDAKRSARDSHVP) are cytoplasmic. The chain crosses the membrane as a helical span at residues 210 to 230 (ILAPLPIGFAVFLVHLATIPI). At 231–257 (TGTGINPARSLGAAIIYNKDHSWDDHW) the chain is on the extracellular side. The NPA 2 signature appears at 236-238 (NPA). A helical transmembrane segment spans residues 258–278 (IFWVGPFIGAALAALYHQIVI). Topologically, residues 279–287 (RAIPFKSKS) are cytoplasmic. The residue at position 285 (serine 285) is a Phosphoserine.

Belongs to the MIP/aquaporin (TC 1.A.8) family. PIP (TC 1.A.8.11) subfamily. As to expression, predominantly expressed in roots and green siliques. Also expressed above ground and in flower buds.

It localises to the cell membrane. Aquaporins facilitate the transport of water and small neutral solutes across cell membranes. This Arabidopsis thaliana (Mouse-ear cress) protein is Probable aquaporin PIP1-4 (PIP1.4).